A 252-amino-acid chain; its full sequence is tRNA-cytidine(32) 2-sulfurtransferase (252 aa).

The PP-loop motif motif lies at 37–42 (SGGKDS). 3 residues coordinate [4Fe-4S] cluster: cysteine 112, cysteine 115, and cysteine 202.

Belongs to the TtcA family. In terms of assembly, homodimer. It depends on Mg(2+) as a cofactor. The cofactor is [4Fe-4S] cluster.

It localises to the cytoplasm. It catalyses the reaction cytidine(32) in tRNA + S-sulfanyl-L-cysteinyl-[cysteine desulfurase] + AH2 + ATP = 2-thiocytidine(32) in tRNA + L-cysteinyl-[cysteine desulfurase] + A + AMP + diphosphate + H(+). The protein operates within tRNA modification. In terms of biological role, catalyzes the ATP-dependent 2-thiolation of cytidine in position 32 of tRNA, to form 2-thiocytidine (s(2)C32). The sulfur atoms are provided by the cysteine/cysteine desulfurase (IscS) system. In Geotalea daltonii (strain DSM 22248 / JCM 15807 / FRC-32) (Geobacter daltonii), this protein is tRNA-cytidine(32) 2-sulfurtransferase.